Reading from the N-terminus, the 186-residue chain is Shikimate kinase (186 aa).

15-20 (GAGKTT) is a binding site for ATP. Threonine 19 contributes to the Mg(2+) binding site. Positions 37, 61, and 83 each coordinate substrate. Arginine 121 is an ATP binding site. Arginine 140 contributes to the substrate binding site.

The protein belongs to the shikimate kinase family. As to quaternary structure, monomer. Mg(2+) serves as cofactor.

It is found in the cytoplasm. It carries out the reaction shikimate + ATP = 3-phosphoshikimate + ADP + H(+). It functions in the pathway metabolic intermediate biosynthesis; chorismate biosynthesis; chorismate from D-erythrose 4-phosphate and phosphoenolpyruvate: step 5/7. Its function is as follows. Catalyzes the specific phosphorylation of the 3-hydroxyl group of shikimic acid using ATP as a cosubstrate. This Psychrobacter cryohalolentis (strain ATCC BAA-1226 / DSM 17306 / VKM B-2378 / K5) protein is Shikimate kinase.